Consider the following 901-residue polypeptide: DNA mismatch repair protein MutS (901 aa).

Polar residues predominate over residues 1–12; that stretch reads MKYSASTSTPKS. A disordered region spans residues 1–25; that stretch reads MKYSASTSTPKSAQPKEEELENSLP. 679 to 686 is a binding site for ATP; the sequence is GPNASGKS.

It belongs to the DNA mismatch repair MutS family.

Functionally, this protein is involved in the repair of mismatches in DNA. It is possible that it carries out the mismatch recognition step. This protein has a weak ATPase activity. The sequence is that of DNA mismatch repair protein MutS from Trichodesmium erythraeum (strain IMS101).